A 938-amino-acid chain; its full sequence is Nitrate reductase (938 aa).

In terms of domain architecture, 4Fe-4S Mo/W bis-MGD-type spans 1–64 (MSVVQSSCAY…RLLDSLAQPN (64 aa)). [4Fe-4S] cluster-binding residues include Cys8, Cys11, Cys15, and Cys50.

It belongs to the prokaryotic molybdopterin-containing oxidoreductase family. NasA/NapA/NarB subfamily. It depends on [4Fe-4S] cluster as a cofactor. The cofactor is Mo-bis(molybdopterin guanine dinucleotide).

The protein localises to the cytoplasm. The enzyme catalyses nitrate + a quinol = a quinone + nitrite + H2O. It functions in the pathway nitrogen metabolism; nitrate reduction (assimilation). Nitrate reductase is a key enzyme involved in the first step of nitrate assimilation in plants, fungi and bacteria. This chain is Nitrate reductase, found in Shewanella frigidimarina (strain NCIMB 400).